We begin with the raw amino-acid sequence, 194 residues long: Small COPII coat GTPase SAR1B (194 aa).

The short motif at 2–4 (FLV) is the STAR; SAR1-N-terminal activation recruitment. Required for the activation and subsequent recruitment to ER membrane element. The tract at residues 10 to 14 (MFLWL) is mediates recruitment to ER membranes. Residues asparagine 30, alanine 31, glycine 32, lysine 33, threonine 34, and threonine 35 each coordinate GDP. Asparagine 30 is a GTP binding site. Glycine 32, lysine 33, threonine 34, and threonine 35 together coordinate GTP. Aspartate 70 provides a ligand contact to Mg(2+). GDP-binding residues include lysine 131, aspartate 133, and isoleucine 172. GTP-binding residues include lysine 131, aspartate 133, and isoleucine 172.

This sequence belongs to the small GTPase superfamily. SAR1 family. Homodimer; upon association with membrane. Part of the coat protein complex II/COPII, composed of SEC23/24 and SEC13/31 heterodimers, that it helps recruit and assemble on endoplasmic reticulum (ER) membranes at ER exit sites.

It localises to the endoplasmic reticulum membrane. Its subcellular location is the golgi apparatus. The protein resides in the golgi stack membrane. The protein localises to the cytoplasm. It is found in the cytosol. It carries out the reaction GTP + H2O = GDP + phosphate + H(+). With respect to regulation, small GTPases activation is mediated by guanine exchange factors (GEF), while inactivation through hydrolysis of the bound GTP is stimulated by GTPase activating proteins (GAP). Its function is as follows. Small GTPase that cycles between an active GTP-bound and an inactive GDP-bound state and mainly functions in vesicle-mediated endoplasmic reticulum (ER) to Golgi transport. The active GTP-bound form inserts into the endoplasmic reticulum membrane where it recruits the remainder of the coat protein complex II/COPII. The coat protein complex II assembling and polymerizing on endoplasmic reticulum membrane is responsible for both the sorting of cargos and the deformation and budding of membranes into vesicles destined to the Golgi. This chain is Small COPII coat GTPase SAR1B (sarB), found in Dictyostelium discoideum (Social amoeba).